The primary structure comprises 350 residues: MTTESYTIKIRRPDDWHIHFRDGEMLRTVVPYTSHYFGRAIVMPNLLTPITEVVSAKAYRGRILAAIPEGDNFQPLMTCYLTDTTESSQIEIGYKEGIFTACKLYPANATTNSSHGVSDIKNIYPLLAVMEKLGMPLLVHGEVTASHIDIFDREARFIEQVMEPLRNQFPALKVVFEHITTKEAAQYVLEGNNNLAATLTPQHLMFNRNHMLVGGIRPHLYCLPVLKRNVHQEALRAAVASGCDRFFLGTDSAPHAQQKKESSCGCAGVFNAPSALPAYATVFEEMNALPHFEAFCSLNGPKFYGLPVNEGFIELTRKPSTVIEHIDCNNEKLIPFLAGEDARWDVKVTD.

The Zn(2+) site is built by His-17 and His-19. Substrate is bound by residues 19 to 21 (HFR) and Asn-45. Positions 103, 140, and 178 each coordinate Zn(2+). Lys-103 is modified (N6-carboxylysine). Substrate is bound at residue His-140. A substrate-binding site is contributed by Leu-223. Asp-251 is a Zn(2+) binding site. Residue Asp-251 is part of the active site. Substrate-binding residues include His-255 and Ala-267.

This sequence belongs to the metallo-dependent hydrolases superfamily. DHOase family. Class II DHOase subfamily. In terms of assembly, homodimer. The cofactor is Zn(2+).

It catalyses the reaction (S)-dihydroorotate + H2O = N-carbamoyl-L-aspartate + H(+). Its pathway is pyrimidine metabolism; UMP biosynthesis via de novo pathway; (S)-dihydroorotate from bicarbonate: step 3/3. Catalyzes the reversible cyclization of carbamoyl aspartate to dihydroorotate. This Photorhabdus laumondii subsp. laumondii (strain DSM 15139 / CIP 105565 / TT01) (Photorhabdus luminescens subsp. laumondii) protein is Dihydroorotase.